Here is a 326-residue protein sequence, read N- to C-terminus: Polyprenal reductase (326 aa).

The next 5 membrane-spanning stretches (helical) occupy residues 26-46, 84-104, 167-187, 212-232, and 256-276; these read MMFGTFIATIVFFGGLMTFVE, HFYTFALFWSWLAFYVLVSTV, INLSHYAVGYVHYFGAVIALL, ILYLGVFFLAWQQQYASNMIL, and LFNLLSSPHMFLEVVMYFCIA.

Belongs to the steroid 5-alpha reductase family. Polyprenal reductase subfamily.

It localises to the endoplasmic reticulum membrane. It catalyses the reaction a di-trans,poly-cis-dolichal + NADP(+) = a di-trans,poly-cis-polyprenal + NADPH + H(+). Its pathway is protein modification; protein glycosylation. Plays a key role in early steps of protein N-linked glycosylation by being involved in the conversion of polyprenol into dolichol. Acts as a polyprenal reductase that mediates the reduction of polyprenal into dolichal in a NADP-dependent mechanism. Dolichols are required for the synthesis of dolichol-linked monosaccharides and the oligosaccharide precursor used for N-glycosylation. The sequence is that of Polyprenal reductase from Drosophila melanogaster (Fruit fly).